The sequence spans 360 residues: GDSL esterase/lipase At1g58430 (360 aa).

The first 23 residues, 1-23 (MWTSKTISFTLFITTTLLGSCNA), serve as a signal peptide directing secretion. N22 carries N-linked (GlcNAc...) asparagine glycosylation. Residue S42 is the Nucleophile of the active site. Residues N104 and N326 are each glycosylated (N-linked (GlcNAc...) asparagine). Residues D334 and H337 contribute to the active site.

Belongs to the 'GDSL' lipolytic enzyme family.

The protein localises to the secreted. The sequence is that of GDSL esterase/lipase At1g58430 from Arabidopsis thaliana (Mouse-ear cress).